We begin with the raw amino-acid sequence, 159 residues long: Ribosomal RNA large subunit methyltransferase H (159 aa).

Residues Leu-76, Gly-108, and 127 to 132 (FSNMTF) contribute to the S-adenosyl-L-methionine site.

The protein belongs to the RNA methyltransferase RlmH family. As to quaternary structure, homodimer.

The protein localises to the cytoplasm. The enzyme catalyses pseudouridine(1915) in 23S rRNA + S-adenosyl-L-methionine = N(3)-methylpseudouridine(1915) in 23S rRNA + S-adenosyl-L-homocysteine + H(+). Specifically methylates the pseudouridine at position 1915 (m3Psi1915) in 23S rRNA. This chain is Ribosomal RNA large subunit methyltransferase H, found in Staphylococcus epidermidis (strain ATCC 35984 / DSM 28319 / BCRC 17069 / CCUG 31568 / BM 3577 / RP62A).